The following is a 92-amino-acid chain: Small ribosomal subunit protein uS19 (92 aa).

This sequence belongs to the universal ribosomal protein uS19 family.

Protein S19 forms a complex with S13 that binds strongly to the 16S ribosomal RNA. This Thermosynechococcus vestitus (strain NIES-2133 / IAM M-273 / BP-1) protein is Small ribosomal subunit protein uS19.